The following is a 120-amino-acid chain: Large ribosomal subunit protein eL8 (120 aa).

Belongs to the eukaryotic ribosomal protein eL8 family. As to quaternary structure, part of the 50S ribosomal subunit. Probably part of the RNase P complex.

It is found in the cytoplasm. Its function is as follows. Multifunctional RNA-binding protein that recognizes the K-turn motif in ribosomal RNA, the RNA component of RNase P, box H/ACA, box C/D and box C'/D' sRNAs. The chain is Large ribosomal subunit protein eL8 from Halobacterium salinarum (strain ATCC 29341 / DSM 671 / R1).